The primary structure comprises 653 residues: Sodium-dependent phosphate transporter 2 (653 aa).

The Extracellular portion of the chain corresponds to 1–5 (MVLDE). A helical transmembrane segment spans residues 6–26 (YMWMVIVGFIIAFVLAFSVGA). Residues 27 to 46 (NDVANSFGTAVGSGVVTLRQ) are Cytoplasmic-facing. The helical transmembrane segment at 47-67 (ACILASIFETIGSVLLGAKVG) threads the bilayer. Residues 68 to 86 (ETIRKGIIDVNLYNNTVDL) are Extracellular-facing. N81 carries N-linked (GlcNAc...) asparagine glycosylation. Residues 87–107 (LMAGEVSAMVGSAVWQLIASF) traverse the membrane as a helical segment. Residues 108–109 (LK) are Cytoplasmic-facing. A helical transmembrane segment spans residues 110–130 (LPVSGTHCIVGATIGFSLVAV). Over 131–142 (GAHSVQWMQLVK) the chain is Extracellular. The helical transmembrane segment at 143-163 (IVASWFISPLLSGLMSGALFL) threads the bilayer. Topologically, residues 164 to 187 (MIKFFILNKEDPVPNGLKALPVFY) are cytoplasmic. A helical transmembrane segment spans residues 188-208 (AATIGINVFSILFTGAPLLGL). The Extracellular portion of the chain corresponds to 209–217 (QTFPVWATA). The chain crosses the membrane as a helical span at residues 218-238 (LLSVGIAIVFALVVWFFVCPW). At 239–483 (MKKKIASRLK…EDKEEKDKSQ (245 aa)) the chain is on the cytoplasmic side. A disordered region spans residues 275–310 (LPGAKGNDESVLPLTSSSPDAAVSSESVSNGNTRVP). Residues 290 to 303 (SSSPDAAVSSESVS) are compositionally biased toward low complexity. The helical transmembrane segment at 484–504 (VHLLFHFLQILTACFGSFAHG) threads the bilayer. Over 505-532 (GNDVSNAIGPLVALWLIYQQGGVMQEAS) the chain is Extracellular. A helical transmembrane segment spans residues 533 to 553 (TPVWLLLYGGVGICAGLWVWG). The Cytoplasmic portion of the chain corresponds to 554–572 (RRVIQTMGKDLTPITPSSG). Residues 573 to 587 (FTIELASAFTVVVAS) traverse the membrane as a helical segment. The Extracellular segment spans residues 588–594 (NIGLPIS). Residues 595-610 (TTHCKVGSVVAVGWIR) form a helical membrane-spanning segment. The Cytoplasmic portion of the chain corresponds to 611-622 (SRKAVDWRLFRN). The helical transmembrane segment at 623–643 (IFLAWFVTVPVAGLFSAGVMA) threads the bilayer. Residues 644–653 (ILQYGILPYV) lie on the Extracellular side of the membrane.

It belongs to the inorganic phosphate transporter (PiT) (TC 2.A.20) family. As to quaternary structure, homodimer.

Its subcellular location is the cell membrane. It is found in the apical cell membrane. It carries out the reaction 2 Na(+)(out) + phosphate(out) = 2 Na(+)(in) + phosphate(in). In terms of biological role, sodium-phosphate symporter which preferentially transports the monovalent form of phosphate with a stoichiometry of two sodium ions per phosphate ion. The chain is Sodium-dependent phosphate transporter 2 (slc20a2) from Xenopus laevis (African clawed frog).